We begin with the raw amino-acid sequence, 428 residues long: Adenosylmethionine-8-amino-7-oxononanoate aminotransferase (428 aa).

A substrate-binding site is contributed by Trp52. Position 112-113 (112-113 (GS)) interacts with pyridoxal 5'-phosphate. Position 144 (Tyr144) interacts with substrate. Asp245 is a binding site for pyridoxal 5'-phosphate. Residues Lys274 and Gly307 each contribute to the substrate site. At Lys274 the chain carries N6-(pyridoxal phosphate)lysine. Position 308–309 (308–309 (PT)) interacts with pyridoxal 5'-phosphate. Arg391 contributes to the substrate binding site.

The protein belongs to the class-III pyridoxal-phosphate-dependent aminotransferase family. BioA subfamily. In terms of assembly, homodimer. The cofactor is pyridoxal 5'-phosphate.

The protein localises to the cytoplasm. It catalyses the reaction (8S)-8-amino-7-oxononanoate + S-adenosyl-L-methionine = S-adenosyl-4-methylsulfanyl-2-oxobutanoate + (7R,8S)-7,8-diammoniononanoate. Its pathway is cofactor biosynthesis; biotin biosynthesis; 7,8-diaminononanoate from 8-amino-7-oxononanoate (SAM route): step 1/1. Catalyzes the transfer of the alpha-amino group from S-adenosyl-L-methionine (SAM) to 7-keto-8-aminopelargonic acid (KAPA) to form 7,8-diaminopelargonic acid (DAPA). It is the only aminotransferase known to utilize SAM as an amino donor. This chain is Adenosylmethionine-8-amino-7-oxononanoate aminotransferase, found in Buchnera aphidicola subsp. Acyrthosiphon pisum (strain APS) (Acyrthosiphon pisum symbiotic bacterium).